A 117-amino-acid polypeptide reads, in one-letter code: Large ribosomal subunit protein bL20 (117 aa).

Belongs to the bacterial ribosomal protein bL20 family.

Its function is as follows. Binds directly to 23S ribosomal RNA and is necessary for the in vitro assembly process of the 50S ribosomal subunit. It is not involved in the protein synthesizing functions of that subunit. The chain is Large ribosomal subunit protein bL20 from Magnetococcus marinus (strain ATCC BAA-1437 / JCM 17883 / MC-1).